A 181-amino-acid polypeptide reads, in one-letter code: Acireductone dioxygenase (181 aa).

Fe(2+) is bound by residues histidine 97, histidine 99, glutamate 103, and histidine 141. Ni(2+) contacts are provided by histidine 97, histidine 99, glutamate 103, and histidine 141.

This sequence belongs to the acireductone dioxygenase (ARD) family. As to quaternary structure, monomer. The cofactor is Fe(2+). Ni(2+) is required as a cofactor.

The catalysed reaction is 1,2-dihydroxy-5-(methylsulfanyl)pent-1-en-3-one + O2 = 3-(methylsulfanyl)propanoate + CO + formate + 2 H(+). It carries out the reaction 1,2-dihydroxy-5-(methylsulfanyl)pent-1-en-3-one + O2 = 4-methylsulfanyl-2-oxobutanoate + formate + 2 H(+). Its pathway is amino-acid biosynthesis; L-methionine biosynthesis via salvage pathway; L-methionine from S-methyl-5-thio-alpha-D-ribose 1-phosphate: step 5/6. Functionally, catalyzes 2 different reactions between oxygen and the acireductone 1,2-dihydroxy-3-keto-5-methylthiopentene (DHK-MTPene) depending upon the metal bound in the active site. Fe-containing acireductone dioxygenase (Fe-ARD) produces formate and 2-keto-4-methylthiobutyrate (KMTB), the alpha-ketoacid precursor of methionine in the methionine recycle pathway. Ni-containing acireductone dioxygenase (Ni-ARD) produces methylthiopropionate, carbon monoxide and formate, and does not lie on the methionine recycle pathway. In Pseudomonas savastanoi pv. phaseolicola (strain 1448A / Race 6) (Pseudomonas syringae pv. phaseolicola (strain 1448A / Race 6)), this protein is Acireductone dioxygenase.